A 294-amino-acid chain; its full sequence is Cyclin-G1 (294 aa).

It belongs to the cyclin family. Cyclin G subfamily.

The protein localises to the nucleus. Its function is as follows. May play a role in growth regulation. Is associated with G2/M phase arrest in response to DNA damage. May be an intermediate by which p53 mediates its role as an inhibitor of cellular proliferation. This chain is Cyclin-G1 (Ccng1), found in Rattus norvegicus (Rat).